The following is a 109-amino-acid chain: Large ribosomal subunit protein uL22 (109 aa).

This sequence belongs to the universal ribosomal protein uL22 family. In terms of assembly, part of the 50S ribosomal subunit.

This protein binds specifically to 23S rRNA; its binding is stimulated by other ribosomal proteins, e.g. L4, L17, and L20. It is important during the early stages of 50S assembly. It makes multiple contacts with different domains of the 23S rRNA in the assembled 50S subunit and ribosome. Its function is as follows. The globular domain of the protein is located near the polypeptide exit tunnel on the outside of the subunit, while an extended beta-hairpin is found that lines the wall of the exit tunnel in the center of the 70S ribosome. The polypeptide is Large ribosomal subunit protein uL22 (Cupriavidus taiwanensis (strain DSM 17343 / BCRC 17206 / CCUG 44338 / CIP 107171 / LMG 19424 / R1) (Ralstonia taiwanensis (strain LMG 19424))).